The chain runs to 404 residues: NADH-quinone oxidoreductase subunit D 2 (404 aa).

The protein belongs to the complex I 49 kDa subunit family. As to quaternary structure, NDH-1 is composed of 14 different subunits. Subunits NuoB, C, D, E, F, and G constitute the peripheral sector of the complex.

Its subcellular location is the cell inner membrane. It catalyses the reaction a quinone + NADH + 5 H(+)(in) = a quinol + NAD(+) + 4 H(+)(out). Functionally, NDH-1 shuttles electrons from NADH, via FMN and iron-sulfur (Fe-S) centers, to quinones in the respiratory chain. The immediate electron acceptor for the enzyme in this species is believed to be ubiquinone. Couples the redox reaction to proton translocation (for every two electrons transferred, four hydrogen ions are translocated across the cytoplasmic membrane), and thus conserves the redox energy in a proton gradient. In Sinorhizobium medicae (strain WSM419) (Ensifer medicae), this protein is NADH-quinone oxidoreductase subunit D 2.